A 564-amino-acid polypeptide reads, in one-letter code: Arginine--tRNA ligase (564 aa).

Positions 136–146 (ANPTGPLHMGN) match the 'HIGH' region motif.

The protein belongs to the class-I aminoacyl-tRNA synthetase family. In terms of assembly, monomer.

It localises to the cytoplasm. It catalyses the reaction tRNA(Arg) + L-arginine + ATP = L-arginyl-tRNA(Arg) + AMP + diphosphate. The sequence is that of Arginine--tRNA ligase from Ruminiclostridium cellulolyticum (strain ATCC 35319 / DSM 5812 / JCM 6584 / H10) (Clostridium cellulolyticum).